The following is a 267-amino-acid chain: Energy-coupling factor transporter transmembrane protein EcfT (267 aa).

A run of 5 helical transmembrane segments spans residues 30–50 (FWYVVIIFFAKGPLTYLLLVA), 67–87 (WAGLKPLLWVIGLTIAIQVLF), 110–130 (ALVILARFILIVLASTVLTAT), 152–172 (VPVNQIAMMISIALRFIPTIM), and 247–267 (SIALAVVVIVSVLFFVARILL).

Belongs to the energy-coupling factor EcfT family. Forms a stable energy-coupling factor (ECF) transporter complex composed of 2 membrane-embedded substrate-binding proteins (S component), 2 ATP-binding proteins (A component) and 2 transmembrane proteins (T component). May be able to interact with more than 1 S component at a time.

The protein localises to the cell membrane. Functionally, transmembrane (T) component of an energy-coupling factor (ECF) ABC-transporter complex. Unlike classic ABC transporters this ECF transporter provides the energy necessary to transport a number of different substrates. The chain is Energy-coupling factor transporter transmembrane protein EcfT from Limosilactobacillus fermentum (strain CECT 5716 / Lc40) (Lactobacillus fermentum).